A 920-amino-acid polypeptide reads, in one-letter code: Isoleucine--tRNA ligase (920 aa).

A 'HIGH' region motif is present at residues proline 57–histidine 67. L-isoleucyl-5'-AMP is bound at residue glutamate 560. Residues lysine 601 to serine 605 carry the 'KMSKS' region motif. Lysine 604 contributes to the ATP binding site. Positions 890, 893, 910, and 913 each coordinate Zn(2+).

Belongs to the class-I aminoacyl-tRNA synthetase family. IleS type 1 subfamily. Monomer. Zn(2+) is required as a cofactor.

The protein localises to the cytoplasm. The catalysed reaction is tRNA(Ile) + L-isoleucine + ATP = L-isoleucyl-tRNA(Ile) + AMP + diphosphate. Its function is as follows. Catalyzes the attachment of isoleucine to tRNA(Ile). As IleRS can inadvertently accommodate and process structurally similar amino acids such as valine, to avoid such errors it has two additional distinct tRNA(Ile)-dependent editing activities. One activity is designated as 'pretransfer' editing and involves the hydrolysis of activated Val-AMP. The other activity is designated 'posttransfer' editing and involves deacylation of mischarged Val-tRNA(Ile). The polypeptide is Isoleucine--tRNA ligase (Caldicellulosiruptor bescii (strain ATCC BAA-1888 / DSM 6725 / KCTC 15123 / Z-1320) (Anaerocellum thermophilum)).